The following is a 153-amino-acid chain: Large ribosomal subunit protein uL15 (153 aa).

The disordered stretch occupies residues 21–41 (RGIGSGKGKTGGRGIKGQKSR). The segment covering 23 to 35 (IGSGKGKTGGRGI) has biased composition (gly residues).

It belongs to the universal ribosomal protein uL15 family. As to quaternary structure, part of the 50S ribosomal subunit.

Its function is as follows. Binds to the 23S rRNA. This chain is Large ribosomal subunit protein uL15, found in Rickettsia rickettsii (strain Iowa).